A 239-amino-acid chain; its full sequence is RNA polymerase sigma factor FliA (239 aa).

The sigma-70 factor domain-2 stretch occupies residues 16–88 (LWQRYVPLVR…MLDELRSRDW (73 aa)). Positions 43–46 (DLLQ) match the Interaction with polymerase core subunit RpoC motif. Positions 96–166 (NAREVAQAMG…IELVTEEHQQ (71 aa)) are sigma-70 factor domain-3. The sigma-70 factor domain-4 stretch occupies residues 185 to 233 (AIESLPEREQLVLTLYYQEELNLKEIGAVLEVGESRVSQLHSQAIKRLR). A DNA-binding region (H-T-H motif) is located at residues 207 to 226 (LKEIGAVLEVGESRVSQLHS).

Belongs to the sigma-70 factor family. FliA subfamily.

The protein resides in the cytoplasm. Sigma factors are initiation factors that promote the attachment of RNA polymerase to specific initiation sites and are then released. This sigma factor controls the expression of flagella-related genes. The polypeptide is RNA polymerase sigma factor FliA (Salmonella typhi).